A 441-amino-acid polypeptide reads, in one-letter code: Histone-lysine N-methyltransferase set9 (441 aa).

The SET domain occupies 108–221 (CKFEICSTNQ…PGEEITTFYS (114 aa)).

Belongs to the class V-like SAM-binding methyltransferase superfamily. Histone-lysine methyltransferase family. Suvar4-20 subfamily.

It localises to the nucleus. It is found in the chromosome. It catalyses the reaction L-lysyl(20)-[histone H4] + 3 S-adenosyl-L-methionine = N(6),N(6),N(6)-trimethyl-L-lysyl(20)-[histone H4] + 3 S-adenosyl-L-homocysteine + 3 H(+). In terms of biological role, histone methyltransferase that specifically trimethylates 'Lys-20' of histone H4 to form H4K20me3. H4 'Lys-20' methylation is apparently not involved in the regulation of gene expression or heterochromatin function but participates in DNA damage response by giving a 'histone mark' required for the recruitment of the checkpoint protein Crb2 to sites of DNA damage. The chain is Histone-lysine N-methyltransferase set9 (set9) from Schizosaccharomyces pombe (strain 972 / ATCC 24843) (Fission yeast).